Reading from the N-terminus, the 37-residue chain is Large ribosomal subunit protein bL36 (37 aa).

Belongs to the bacterial ribosomal protein bL36 family.

The sequence is that of Large ribosomal subunit protein bL36 from Thioalkalivibrio sulfidiphilus (strain HL-EbGR7).